A 518-amino-acid chain; its full sequence is Integrator complex subunit 14 (518 aa).

A VWFA domain is found at 2–204; that stretch reads PTVVVMDVSL…KNVQSMFGKL (203 aa). The Mg(2+) site is built by S10, S12, and T86. Residues 373-394 form a disordered region; it reads SDAKENPYGDDDNKSPFPLQPK. Residues 374–386 show a composition bias toward basic and acidic residues; sequence DAKENPYGDDDNK.

The protein belongs to the Integrator subunit 14 family. Component of the Integrator complex, composed of core subunits INTS1, INTS2, INTS3, INTS4, INTS5, INTS6, INTS7, INTS8, INTS9/RC74, INTS10, INTS11/CPSF3L, INTS12, INTS13, INTS14 and INTS15. The core complex associates with protein phosphatase 2A subunits PPP2CA and PPP2R1A, to form the Integrator-PP2A (INTAC) complex. INTS14 is part of the tail subcomplex, composed of INTS10, INTS13, INTS14 and INTS15.

It localises to the nucleus. In terms of biological role, component of the integrator complex, a multiprotein complex that terminates RNA polymerase II (Pol II) transcription in the promoter-proximal region of genes. The integrator complex provides a quality checkpoint during transcription elongation by driving premature transcription termination of transcripts that are unfavorably configured for transcriptional elongation: the complex terminates transcription by (1) catalyzing dephosphorylation of the C-terminal domain (CTD) of Pol II subunit POLR2A/RPB1 and SUPT5H/SPT5, (2) degrading the exiting nascent RNA transcript via endonuclease activity and (3) promoting the release of Pol II from bound DNA. The integrator complex is also involved in terminating the synthesis of non-coding Pol II transcripts, such as enhancer RNAs (eRNAs), small nuclear RNAs (snRNAs), telomerase RNAs and long non-coding RNAs (lncRNAs). Within the integrator complex, INTS14 is part of the integrator tail module that acts as a platform for the recruitment of transcription factors at promoters. In Gallus gallus (Chicken), this protein is Integrator complex subunit 14.